Here is a 259-residue protein sequence, read N- to C-terminus: 14-3-3-like protein (259 aa).

The segment at 237–259 (DTTDDAEDEIREGSKQESGDGQQ) is disordered. Basic and acidic residues predominate over residues 247-259 (REGSKQESGDGQQ).

Belongs to the 14-3-3 family. In terms of tissue distribution, leaves specific.

The protein is 14-3-3-like protein of Solanum tuberosum (Potato).